The chain runs to 82 residues: Myosin light chain alkali (82 aa).

The EF-hand domain maps to 7-42 (GCYEDFIECLKLYDKEENGTMMLAELQHALLALGES).

As to quaternary structure, myosin is a hexamer of 2 heavy chains and 4 light chains.

The chain is Myosin light chain alkali (Mlc1) from Drosophila mauritiana (Fruit fly).